Consider the following 322-residue polypeptide: tRNA uridine(34) hydroxylase (322 aa).

The Rhodanese domain maps to 125 to 219 (QDPNTIVIDA…YGKDPEVQGK (95 aa)). C179 functions as the Cysteine persulfide intermediate in the catalytic mechanism.

The protein belongs to the TrhO family.

It carries out the reaction uridine(34) in tRNA + AH2 + O2 = 5-hydroxyuridine(34) in tRNA + A + H2O. Catalyzes oxygen-dependent 5-hydroxyuridine (ho5U) modification at position 34 in tRNAs. The chain is tRNA uridine(34) hydroxylase from Bacillus subtilis (strain 168).